The following is a 350-amino-acid chain: Induced myeloid leukemia cell differentiation protein Mcl-1 (350 aa).

Glycyl lysine isopeptide (Lys-Gly) (interchain with G-Cter in ubiquitin) cross-links involve residues K5 and K40. Residues 47-87 are disordered; that stretch reads EIGGGEAGAVIGGSAGASPPSTLTPDSRRVARPPPIGAEVP. Over residues 50-61 the composition is skewed to gly residues; it reads GGEAGAVIGGSA. Positions 104 to 175 are PEST-like; it reads RAAPLEEMEA…PAEEEEDELY (72 aa). Phosphoserine is present on S121. A Glycyl lysine isopeptide (Lys-Gly) (interchain with G-Cter in ubiquitin) cross-link involves residue K136. Positions 148–171 are disordered; that stretch reads GESGNNTSTDGSLPSTPPPAEEEE. Residues 150 to 161 are compositionally biased toward polar residues; sequence SGNNTSTDGSLP. Position 159 is a phosphoserine; by GSK3-alpha and GSK3-beta (S159). Phosphoserine is present on S162. T163 carries the post-translational modification Phosphothreonine; by MAPK. Residues K194 and K197 each participate in a glycyl lysine isopeptide (Lys-Gly) (interchain with G-Cter in ubiquitin) cross-link. The BH3 signature appears at 209–223; the sequence is ALETLRRVGDGVQRN. Positions 252–272 match the BH1 motif; it reads HVFSDGVTNWGRIVTLISFGA. A BH2 motif is present at residues 304 to 319; the sequence is DWLVKQRGWDGFVEFF. A helical transmembrane segment spans residues 328 to 348; the sequence is IRNVLLAFAGVAGVGAGLAYL.

This sequence belongs to the Bcl-2 family. Interacts with HIF3A (via C-terminus domain). Interacts with BAD, BOK, BIK and BMF. Interacts with PMAIP1. Interacts with BBC3. Isoform 1 interacts with BAX, BAK1 and TPT1. Heterodimer of isoform 1 and isoform 2. Homodimers of isoform 1 or isoform 2 are not detected. Isoform 2 does not interact with pro-apoptotic BCL2-related proteins. Interacts with RTL10/BOP. Interacts with BCL2L11; may sequester BCL2L11 to prevent its pro-apoptotic activity. Interacts with GIMAP5 and HSPA8/HSC70; the interaction between HSPA8 and MCL1 is impaired in the absence of GIMAP5. In terms of processing, cleaved by CASP3 during apoptosis. In intact cells cleavage occurs preferentially after Asp-127, yielding a pro-apoptotic 28 kDa C-terminal fragment. Rapidly degraded in the absence of phosphorylation on Thr-163 in the PEST region. Post-translationally, phosphorylated on Ser-159, by GSK3, in response to IL3/interleukin-3 withdrawal. Phosphorylation at Ser-159 induces ubiquitination and proteasomal degradation, abrogating the anti-apoptotic activity. Treatment with taxol or okadaic acid induces phosphorylation on additional sites. In terms of processing, ubiquitinated. Ubiquitination is induced by phosphorylation at Ser-159. Deubiquitinated by USP20; leading to increased stability.

It is found in the membrane. It localises to the cytoplasm. The protein resides in the mitochondrion. The protein localises to the nucleus. Its subcellular location is the nucleoplasm. Its function is as follows. Involved in the regulation of apoptosis versus cell survival, and in the maintenance of viability but not of proliferation. Mediates its effects by interactions with a number of other regulators of apoptosis. Isoform 1 inhibits apoptosis. Isoform 2 promotes apoptosis. This chain is Induced myeloid leukemia cell differentiation protein Mcl-1 (MCL1), found in Homo sapiens (Human).